Here is a 524-residue protein sequence, read N- to C-terminus: Probable glutamyl-tRNA reductase 3, chloroplastic (524 aa).

Residues 1-52 constitute a chloroplast transit peptide; the sequence is MAVSNASVVLSPNLETSSSWYHHNPSSSLDLIRIHTLPMNKMTRRGLIQRVR. Substrate-binding positions include 129-132, S189, 194-196, and Q200; these read TCNR and ENQ. The active-site Nucleophile is C130. An NADP(+)-binding site is contributed by 269–274; that stretch reads GAGEMG.

This sequence belongs to the glutamyl-tRNA reductase family.

Its subcellular location is the plastid. It localises to the chloroplast. The enzyme catalyses (S)-4-amino-5-oxopentanoate + tRNA(Glu) + NADP(+) = L-glutamyl-tRNA(Glu) + NADPH + H(+). It functions in the pathway porphyrin-containing compound metabolism; protoporphyrin-IX biosynthesis; 5-aminolevulinate from L-glutamyl-tRNA(Glu): step 1/2. The protein operates within porphyrin-containing compound metabolism; chlorophyll biosynthesis. Catalyzes the NADPH-dependent reduction of glutamyl-tRNA(Glu) to glutamate 1-semialdehyde (GSA). The protein is Probable glutamyl-tRNA reductase 3, chloroplastic (HEMA3) of Arabidopsis thaliana (Mouse-ear cress).